The following is a 218-amino-acid chain: Cytochrome b6 (218 aa).

A helical membrane pass occupies residues 35–55; sequence IFYCLGGITLVCFLIQFATGF. Cys38 contacts heme c. Positions 89 and 103 each coordinate heme b. Helical transmembrane passes span 93 to 113, 119 to 139, and 189 to 209; these read ASMM…TGGF, LTWV…VTGY, and LHTF…FLMI. Positions 190 and 205 each coordinate heme b.

This sequence belongs to the cytochrome b family. PetB subfamily. The 4 large subunits of the cytochrome b6-f complex are cytochrome b6, subunit IV (17 kDa polypeptide, PetD), cytochrome f and the Rieske protein, while the 4 small subunits are PetG, PetL, PetM and PetN. The complex functions as a dimer. Heme b serves as cofactor. Heme c is required as a cofactor.

The protein localises to the cellular thylakoid membrane. In terms of biological role, component of the cytochrome b6-f complex, which mediates electron transfer between photosystem II (PSII) and photosystem I (PSI), cyclic electron flow around PSI, and state transitions. The chain is Cytochrome b6 from Prochlorococcus marinus subsp. pastoris (strain CCMP1986 / NIES-2087 / MED4).